Reading from the N-terminus, the 273-residue chain is Orotidine 5'-phosphate decarboxylase (273 aa).

The Proton donor role is filled by Lys-95.

This sequence belongs to the OMP decarboxylase family. Type 2 subfamily.

It catalyses the reaction orotidine 5'-phosphate + H(+) = UMP + CO2. It participates in pyrimidine metabolism; UMP biosynthesis via de novo pathway; UMP from orotate: step 2/2. The polypeptide is Orotidine 5'-phosphate decarboxylase (Bordetella bronchiseptica (strain ATCC BAA-588 / NCTC 13252 / RB50) (Alcaligenes bronchisepticus)).